The primary structure comprises 105 residues: uncharacterized protein (105 aa).

The N-terminal stretch at 1–24 (MYWPCLVITPFTVGESFCLLLSLG) is a signal peptide.

This is an uncharacterized protein from Saccharomyces cerevisiae (strain ATCC 204508 / S288c) (Baker's yeast).